The following is a 271-amino-acid chain: Acyl-[acyl-carrier-protein]--UDP-N-acetylglucosamine O-acyltransferase (271 aa).

The protein belongs to the transferase hexapeptide repeat family. LpxA subfamily. As to quaternary structure, homotrimer.

It localises to the cytoplasm. It carries out the reaction a (3R)-hydroxyacyl-[ACP] + UDP-N-acetyl-alpha-D-glucosamine = a UDP-3-O-[(3R)-3-hydroxyacyl]-N-acetyl-alpha-D-glucosamine + holo-[ACP]. The protein operates within glycolipid biosynthesis; lipid IV(A) biosynthesis; lipid IV(A) from (3R)-3-hydroxytetradecanoyl-[acyl-carrier-protein] and UDP-N-acetyl-alpha-D-glucosamine: step 1/6. Its function is as follows. Involved in the biosynthesis of lipid A, a phosphorylated glycolipid that anchors the lipopolysaccharide to the outer membrane of the cell. This is Acyl-[acyl-carrier-protein]--UDP-N-acetylglucosamine O-acyltransferase from Rhizobium rhizogenes (strain K84 / ATCC BAA-868) (Agrobacterium radiobacter).